We begin with the raw amino-acid sequence, 391 residues long: Histidinol-phosphate aminotransferase (391 aa).

Lys246 bears the N6-(pyridoxal phosphate)lysine mark.

It belongs to the class-II pyridoxal-phosphate-dependent aminotransferase family. Histidinol-phosphate aminotransferase subfamily. It depends on pyridoxal 5'-phosphate as a cofactor.

The catalysed reaction is L-histidinol phosphate + 2-oxoglutarate = 3-(imidazol-4-yl)-2-oxopropyl phosphate + L-glutamate. It participates in amino-acid biosynthesis; L-histidine biosynthesis; L-histidine from 5-phospho-alpha-D-ribose 1-diphosphate: step 7/9. This chain is Histidinol-phosphate aminotransferase, found in Methanopyrus kandleri (strain AV19 / DSM 6324 / JCM 9639 / NBRC 100938).